The sequence spans 490 residues: MDIRSTDTSLLTWTGDTLALGLPEGAIEIAGELAELNDKLGGNLGDLISETEFEGKLGSSAATRLGGGPIRKLILVGLGKTADFDLQTLRLAAAAIARLAKQQKSQALAISLPVVGDQSATAGAITEGLLLATHQDTRFKSTKEEKGAKLETVELLGLGEQASAIAKSEQICSGVILARELVNAPANTVTPLTMAETAEQIAAEYGLSLNILEQEECESLGMGAFLGVAKASDIPPKFLHLIYKPQGTPKRKLAIVGKSLTFDSGGLNIKGAGSGIETMKMDMGGGAATLGAAKAIAQLQPEVEVHFICPATENMISGRAMHPGDILTASNGKTIEVNNTDAEGRLTLADGLVFAEKLEVDAIVDLATLTGACVIALGDDIAGLWSSDESLAAQIQEAAKLAGEKFWPMPLEEKYFEGMKSQIADMKNTGPRPGGSITAALFLKQFINNTPWLHLDIAGPVWSDKENGVNNSGATGFPVRTLVNWVMANN.

Mn(2+)-binding residues include K258 and D263. The active site involves K270. Residues D282, D341, and E343 each contribute to the Mn(2+) site. R345 is an active-site residue.

This sequence belongs to the peptidase M17 family. It depends on Mn(2+) as a cofactor.

The protein localises to the cytoplasm. The enzyme catalyses Release of an N-terminal amino acid, Xaa-|-Yaa-, in which Xaa is preferably Leu, but may be other amino acids including Pro although not Arg or Lys, and Yaa may be Pro. Amino acid amides and methyl esters are also readily hydrolyzed, but rates on arylamides are exceedingly low.. The catalysed reaction is Release of an N-terminal amino acid, preferentially leucine, but not glutamic or aspartic acids.. Its function is as follows. Presumably involved in the processing and regular turnover of intracellular proteins. Catalyzes the removal of unsubstituted N-terminal amino acids from various peptides. The polypeptide is Probable cytosol aminopeptidase (Microcystis aeruginosa (strain NIES-843 / IAM M-2473)).